The chain runs to 311 residues: 4-hydroxy-3-methylbut-2-enyl diphosphate reductase (311 aa).

C12 is a [4Fe-4S] cluster binding site. (2E)-4-hydroxy-3-methylbut-2-enyl diphosphate contacts are provided by H43 and H81. The dimethylallyl diphosphate site is built by H43 and H81. Residues H43 and H81 each contribute to the isopentenyl diphosphate site. C103 is a binding site for [4Fe-4S] cluster. H131 is a binding site for (2E)-4-hydroxy-3-methylbut-2-enyl diphosphate. H131 serves as a coordination point for dimethylallyl diphosphate. Residue H131 participates in isopentenyl diphosphate binding. The Proton donor role is filled by E133. Residue T170 participates in (2E)-4-hydroxy-3-methylbut-2-enyl diphosphate binding. Residue C198 coordinates [4Fe-4S] cluster. S226, N228, and S271 together coordinate (2E)-4-hydroxy-3-methylbut-2-enyl diphosphate. Residues S226, N228, and S271 each coordinate dimethylallyl diphosphate. 3 residues coordinate isopentenyl diphosphate: S226, N228, and S271.

It belongs to the IspH family. The cofactor is [4Fe-4S] cluster.

It carries out the reaction isopentenyl diphosphate + 2 oxidized [2Fe-2S]-[ferredoxin] + H2O = (2E)-4-hydroxy-3-methylbut-2-enyl diphosphate + 2 reduced [2Fe-2S]-[ferredoxin] + 2 H(+). The catalysed reaction is dimethylallyl diphosphate + 2 oxidized [2Fe-2S]-[ferredoxin] + H2O = (2E)-4-hydroxy-3-methylbut-2-enyl diphosphate + 2 reduced [2Fe-2S]-[ferredoxin] + 2 H(+). The protein operates within isoprenoid biosynthesis; dimethylallyl diphosphate biosynthesis; dimethylallyl diphosphate from (2E)-4-hydroxy-3-methylbutenyl diphosphate: step 1/1. It functions in the pathway isoprenoid biosynthesis; isopentenyl diphosphate biosynthesis via DXP pathway; isopentenyl diphosphate from 1-deoxy-D-xylulose 5-phosphate: step 6/6. Its function is as follows. Catalyzes the conversion of 1-hydroxy-2-methyl-2-(E)-butenyl 4-diphosphate (HMBPP) into a mixture of isopentenyl diphosphate (IPP) and dimethylallyl diphosphate (DMAPP). Acts in the terminal step of the DOXP/MEP pathway for isoprenoid precursor biosynthesis. In Brevibacillus brevis (strain 47 / JCM 6285 / NBRC 100599), this protein is 4-hydroxy-3-methylbut-2-enyl diphosphate reductase.